Here is a 703-residue protein sequence, read N- to C-terminus: Cycloartenol synthase (703 aa).

PFTB repeat units lie at residues 59-103 (IKKA…QLPE) and 106-148 (QREI…RLLG). D435 acts as the Proton donor in catalysis. PFTB repeat units follow at residues 461-503 (IADG…QNIM), 539-579 (IARG…VASG), 587-628 (IVKA…VNTG), and 645-686 (IERG…KNIF).

It belongs to the terpene cyclase/mutase family.

The enzyme catalyses (S)-2,3-epoxysqualene = cycloartenol. In terms of biological role, converts oxidosqualene to cycloartenol (in vitro). The protein is Cycloartenol synthase (cas1) of Dictyostelium discoideum (Social amoeba).